Consider the following 279-residue polypeptide: Tryptophan 2,3-dioxygenase (279 aa).

Substrate is bound by residues 48-52, Tyr110, and Arg114; that span reads FIIQH. His237 provides a ligand contact to heme. Thr251 contacts substrate.

It belongs to the tryptophan 2,3-dioxygenase family. In terms of assembly, homotetramer. It depends on heme as a cofactor.

The enzyme catalyses L-tryptophan + O2 = N-formyl-L-kynurenine. The protein operates within amino-acid degradation; L-tryptophan degradation via kynurenine pathway; L-kynurenine from L-tryptophan: step 1/2. In terms of biological role, heme-dependent dioxygenase that catalyzes the oxidative cleavage of the L-tryptophan (L-Trp) pyrrole ring and converts L-tryptophan to N-formyl-L-kynurenine. Catalyzes the oxidative cleavage of the indole moiety. In Bradyrhizobium sp. (strain ORS 278), this protein is Tryptophan 2,3-dioxygenase.